Reading from the N-terminus, the 428-residue chain is Serine--tRNA ligase (428 aa).

231–233 lines the L-serine pocket; sequence TAE. Position 262-264 (262-264) interacts with ATP; it reads RSE. Glu285 serves as a coordination point for L-serine. 349–352 contributes to the ATP binding site; that stretch reads EISS. Ser385 contacts L-serine.

This sequence belongs to the class-II aminoacyl-tRNA synthetase family. Type-1 seryl-tRNA synthetase subfamily. As to quaternary structure, homodimer. The tRNA molecule binds across the dimer.

Its subcellular location is the cytoplasm. It catalyses the reaction tRNA(Ser) + L-serine + ATP = L-seryl-tRNA(Ser) + AMP + diphosphate + H(+). The catalysed reaction is tRNA(Sec) + L-serine + ATP = L-seryl-tRNA(Sec) + AMP + diphosphate + H(+). The protein operates within aminoacyl-tRNA biosynthesis; selenocysteinyl-tRNA(Sec) biosynthesis; L-seryl-tRNA(Sec) from L-serine and tRNA(Sec): step 1/1. In terms of biological role, catalyzes the attachment of serine to tRNA(Ser). Is also able to aminoacylate tRNA(Sec) with serine, to form the misacylated tRNA L-seryl-tRNA(Sec), which will be further converted into selenocysteinyl-tRNA(Sec). The sequence is that of Serine--tRNA ligase from Staphylococcus epidermidis (strain ATCC 35984 / DSM 28319 / BCRC 17069 / CCUG 31568 / BM 3577 / RP62A).